Reading from the N-terminus, the 555-residue chain is Glutamine--tRNA ligase (555 aa).

The 'HIGH' region motif lies at 34–44; that stretch reads PEPNGYLHIGH. Residues 35-37 and 41-47 each bind ATP; these read EPN and HIGHAKS. Residues Asp67 and Tyr212 each contribute to the L-glutamine site. ATP-binding positions include Thr231, 261 to 262, and 269 to 271; these read RL and MSK. The short motif at 268–272 is the 'KMSKS' region element; the sequence is VMSKR.

This sequence belongs to the class-I aminoacyl-tRNA synthetase family. In terms of assembly, monomer.

It is found in the cytoplasm. It catalyses the reaction tRNA(Gln) + L-glutamine + ATP = L-glutaminyl-tRNA(Gln) + AMP + diphosphate. This chain is Glutamine--tRNA ligase, found in Cronobacter sakazakii (strain ATCC BAA-894) (Enterobacter sakazakii).